The primary structure comprises 501 residues: Orsellinic acid/F9775 biosynthesis cluster protein D (501 aa).

A disordered region spans residues 137-189 (EVTPTTEDEDDEENESENDEEEGDVDLEEQEDDNGGRQSTTVTTSPGPSAPSV). A compositionally biased stretch (acidic residues) spans 142–169 (TEDEDDEENESENDEEEGDVDLEEQEDD). Residues 172–183 (GRQSTTVTTSPG) are compositionally biased toward polar residues.

Functionally, part of the gene cluster that mediates the biosynthesis of orsellinic acid, as well as of the cathepsin K inhibitors F9775 A and F9775 B. The non-reducing polyketide synthase orsA produces orsellinic acid by condensing acetyl-CoA with 3 malonyl-CoA units. Further modifications by the decarboxylase orsB and the tyrosinase-like protein orsC lead to the production of F9775 A and F9775 B. The functions of orsD and orsE remain unclear since only orsB and orsC are required to convert orsellinic acid into F9775 A and F9775 B. This chain is Orsellinic acid/F9775 biosynthesis cluster protein D, found in Emericella nidulans (strain FGSC A4 / ATCC 38163 / CBS 112.46 / NRRL 194 / M139) (Aspergillus nidulans).